A 1037-amino-acid chain; its full sequence is Exportin-T (1037 aa).

Belongs to the exportin family.

It localises to the nucleus. The protein localises to the cytoplasm. TRNA nucleus export receptor which facilitates tRNA translocation across the nuclear pore complex. Involved in pre-tRNA splicing, probably by affecting the interaction of pre-tRNA with splicing endonuclease. In Neosartorya fischeri (strain ATCC 1020 / DSM 3700 / CBS 544.65 / FGSC A1164 / JCM 1740 / NRRL 181 / WB 181) (Aspergillus fischerianus), this protein is Exportin-T (los1).